Consider the following 257-residue polypeptide: Transcription factor LBX2 (257 aa).

Positions 1–43 (MTSSSKDMKAGSVLQSSGEERRRGPLDQLPPPANSNKPLTPFS) are disordered. The segment at 1 to 46 (MTSSSKDMKAGSVLQSSGEERRRGPLDQLPPPANSNKPLTPFSIED) is required for convergent extension movement and hypaxial myogenesis during gastrulation. Required for the formation of thick and thin myofilaments. Required for myod1 expression in the pectoral fin bud. Required for continuous expression of cxcl12a in the posterior lateral mesoderm at the tail bud stage and in adaxial cells at the 10-somite stage. A DNA-binding region (homeobox) is located at residues 126–185 (RRKSRTAFTNHQIYELEKRFLYQKYLSPADRDQIAQQLGLTNAQVITWFQNRRAKLKRDL). Residues 206 to 257 (LVSMEDMEDAHGGSGPISPSLSPRAFPQSPSSSRGQTTDEFSEEDEEIEVDD) are disordered. The segment covering 233–243 (QSPSSSRGQTT) has biased composition (polar residues). Residues 245–257 (EFSEEDEEIEVDD) show a composition bias toward acidic residues.

In terms of assembly, interacts (via N-terminus) with tle3a/gro2 (via C-terminus).

Its subcellular location is the nucleus. Transcription factor required in several developmental processes. Involved in axis formation during embryonic development by inhibiting tle3a/gro2 from binding to tcf7l1a, thereby facilitating ctnnb1-mediated transcription of canonical Wnt/CTNNB1 signaling target genes. Regulates convergent extension movements and hypaxial myogenesis during gastrulation by activating non-canonical Wnt signaling via wnt5b. Required for the formation of myofibrils and fusion of fast muscle precursor cells, potentially via transcriptional regulation of genes specific to thick and thin myofilaments. Regulates the migration of the posterior lateral line primordium during embryonic development, possibly via regulation of cxcl12a/sdf1a expression in the posterior lateral mesoderm, thereby modulating the deposition of neuromasts at correct intervals. This Danio rerio (Zebrafish) protein is Transcription factor LBX2.